We begin with the raw amino-acid sequence, 723 residues long: Polyribonucleotide nucleotidyltransferase (723 aa).

Residues D497 and D503 each coordinate Mg(2+). One can recognise a KH domain in the interval 564–623 (PRLLSFRIDPELIGTVIGPGGRTIKGITERTNTKIDIEDGGIVTIASHDGAAAEAAQRII). Positions 633 to 701 (GEVFTGTITR…NRGRINLTLR (69 aa)) constitute an S1 motif domain. Residues 701–723 (RGVPQNGEETQSEPAPTPVAPLN) form a disordered region.

This sequence belongs to the polyribonucleotide nucleotidyltransferase family. Mg(2+) is required as a cofactor.

It localises to the cytoplasm. The catalysed reaction is RNA(n+1) + phosphate = RNA(n) + a ribonucleoside 5'-diphosphate. Functionally, involved in mRNA degradation. Catalyzes the phosphorolysis of single-stranded polyribonucleotides processively in the 3'- to 5'-direction. In Prochlorococcus marinus (strain MIT 9313), this protein is Polyribonucleotide nucleotidyltransferase.